The primary structure comprises 297 residues: MLELYEKRRALLLLRLAAMFLSLAALLITVLNREDGFFSINVFGSPQPILAKATADFTLVKGLKFFAGAMGIVAGYSFLQLAIAMASIFSGAPSILGGKRMAWLCFVGDMTASHLCAAAAAVSAQLAYLGKRGAPMWSAVCTYFSHYCLVFGLAVILAFLATLAALLVASISSYHLAYDVFCALYAMYKELVVDEVCSRSMKKTIPRIIKSGHQQRHHHRKPPLAPHCHGATSCKLCILQQQQWADLELHLSRAITLSAPSAVEMKIPPPPSVPSVVEMEMEIPSVSRVLEMETPCK.

At 1-10 (MLELYEKRRA) the chain is on the cytoplasmic side. Residues 11 to 31 (LLLLRLAAMFLSLAALLITVL) form a helical membrane-spanning segment. Residues 32–64 (NREDGFFSINVFGSPQPILAKATADFTLVKGLK) are Extracellular-facing. A helical transmembrane segment spans residues 65–85 (FFAGAMGIVAGYSFLQLAIAM). The Cytoplasmic portion of the chain corresponds to 86–101 (ASIFSGAPSILGGKRM). A helical membrane pass occupies residues 102–122 (AWLCFVGDMTASHLCAAAAAV). Topologically, residues 123-148 (SAQLAYLGKRGAPMWSAVCTYFSHYC) are extracellular. A helical membrane pass occupies residues 149–169 (LVFGLAVILAFLATLAALLVA). The Cytoplasmic portion of the chain corresponds to 170-297 (SISSYHLAYD…RVLEMETPCK (128 aa)).

This sequence belongs to the Casparian strip membrane proteins (CASP) family. As to quaternary structure, homodimer and heterodimers.

The protein localises to the cell membrane. The protein is CASP-like protein 2U8 of Selaginella moellendorffii (Spikemoss).